We begin with the raw amino-acid sequence, 141 residues long: U-scoloptoxin(17)-Er3a (141 aa).

A signal peptide spans 1 to 21 (MKSTFALVFGILMVIAHLSFA).

The protein belongs to the scoloptoxin-17 family. Contains 3 disulfide bonds. Expressed by the venom gland.

Its subcellular location is the secreted. The polypeptide is U-scoloptoxin(17)-Er3a (Ethmostigmus rubripes (Giant centipede)).